A 394-amino-acid polypeptide reads, in one-letter code: Protein TsgA homolog (394 aa).

12 helical membrane-spanning segments follow: residues 11-31, 51-71, 76-96, 101-121, 134-154, 160-180, 206-226, 246-266, 274-294, 297-317, 334-354, and 363-383; these read WISF…GMVM, FLNT…EIIP, LVFG…GHNL, ACMF…TFLI, LLFT…IAAT, VAWY…FILT, IGVL…LGFI, GLVS…SVAL, IVTV…SSQQ, MLSM…TTLI, FILT…GPIV, and LATA…LGFV.

This sequence belongs to the major facilitator superfamily. TsgA family.

Its subcellular location is the cell inner membrane. The protein is Protein TsgA homolog of Edwardsiella ictaluri (strain 93-146).